We begin with the raw amino-acid sequence, 288 residues long: 4-hydroxy-tetrahydrodipicolinate synthase (288 aa).

Pyruvate is bound at residue T42. Residue Y129 is the Proton donor/acceptor of the active site. K157 serves as the catalytic Schiff-base intermediate with substrate. I198 contributes to the pyruvate binding site.

This sequence belongs to the DapA family. In terms of assembly, homotetramer; dimer of dimers.

The protein resides in the cytoplasm. It carries out the reaction L-aspartate 4-semialdehyde + pyruvate = (2S,4S)-4-hydroxy-2,3,4,5-tetrahydrodipicolinate + H2O + H(+). It participates in amino-acid biosynthesis; L-lysine biosynthesis via DAP pathway; (S)-tetrahydrodipicolinate from L-aspartate: step 3/4. In terms of biological role, catalyzes the condensation of (S)-aspartate-beta-semialdehyde [(S)-ASA] and pyruvate to 4-hydroxy-tetrahydrodipicolinate (HTPA). The protein is 4-hydroxy-tetrahydrodipicolinate synthase of Chlamydia abortus (strain DSM 27085 / S26/3) (Chlamydophila abortus).